Here is a 527-residue protein sequence, read N- to C-terminus: Proline--tRNA ligase (527 aa).

Belongs to the class-II aminoacyl-tRNA synthetase family. ProS type 3 subfamily. In terms of assembly, homodimer.

The protein resides in the cytoplasm. The catalysed reaction is tRNA(Pro) + L-proline + ATP = L-prolyl-tRNA(Pro) + AMP + diphosphate. Functionally, catalyzes the attachment of proline to tRNA(Pro) in a two-step reaction: proline is first activated by ATP to form Pro-AMP and then transferred to the acceptor end of tRNA(Pro). The chain is Proline--tRNA ligase from Sphingopyxis alaskensis (strain DSM 13593 / LMG 18877 / RB2256) (Sphingomonas alaskensis).